A 30-amino-acid chain; its full sequence is Cycloviolin-D (30 aa).

Residues 1-30 (GFPCGESCVFIPCISAAIGCSCKNKVCYRN) constitute a cross-link (cyclopeptide (Gly-Asn)). 3 disulfides stabilise this stretch: cysteine 4/cysteine 20, cysteine 8/cysteine 22, and cysteine 13/cysteine 27.

This is a cyclic peptide.

In terms of biological role, probably participates in a plant defense mechanism. Has anti-HIV activity. The sequence is that of Cycloviolin-D from Leonia cymosa (Sacha uba).